The chain runs to 422 residues: UDP-N-acetylglucosamine 1-carboxyvinyltransferase (422 aa).

Residue 22–23 coordinates phosphoenolpyruvate; it reads KN. A UDP-N-acetyl-alpha-D-glucosamine-binding site is contributed by Arg94. The active-site Proton donor is the Cys118. 2-(S-cysteinyl)pyruvic acid O-phosphothioketal is present on Cys118. Residues 123 to 127, Asp308, and Ile330 contribute to the UDP-N-acetyl-alpha-D-glucosamine site; that span reads RPVDL.

The protein belongs to the EPSP synthase family. MurA subfamily.

The protein resides in the cytoplasm. The enzyme catalyses phosphoenolpyruvate + UDP-N-acetyl-alpha-D-glucosamine = UDP-N-acetyl-3-O-(1-carboxyvinyl)-alpha-D-glucosamine + phosphate. It functions in the pathway cell wall biogenesis; peptidoglycan biosynthesis. Its function is as follows. Cell wall formation. Adds enolpyruvyl to UDP-N-acetylglucosamine. This chain is UDP-N-acetylglucosamine 1-carboxyvinyltransferase, found in Dinoroseobacter shibae (strain DSM 16493 / NCIMB 14021 / DFL 12).